The chain runs to 290 residues: Syntaxin (290 aa).

Positions 1–22 (MTKDRLAALKAAQSDDDDNDDV) are disordered. Topologically, residues 1–267 (MTKDRLAALK…KYQSKARRKK (267 aa)) are cytoplasmic. A coiled-coil region spans residues 32–114 (MEEFFEQVDE…EEHTNKSSAD (83 aa)). In terms of domain architecture, t-SNARE coiled-coil homology spans 194–256 (LADIEARHND…ETAKMDTKKA (63 aa)). The chain crosses the membrane as a helical; Anchor for type IV membrane protein span at residues 268 to 288 (IMILVCLAILIIILVGVIGGT). The Extracellular segment spans residues 289–290 (LG).

This sequence belongs to the syntaxin family.

The protein resides in the membrane. Potentially involved in docking of synaptic vesicles at presynaptic active zones. The chain is Syntaxin from Aplysia californica (California sea hare).